A 362-amino-acid polypeptide reads, in one-letter code: Flagellar P-ring protein (362 aa).

The signal sequence occupies residues 1–18 (MKHIALIVLYFLSFSVQA).

Belongs to the FlgI family. As to quaternary structure, the basal body constitutes a major portion of the flagellar organelle and consists of four rings (L,P,S, and M) mounted on a central rod.

The protein resides in the periplasm. It is found in the bacterial flagellum basal body. Functionally, assembles around the rod to form the L-ring and probably protects the motor/basal body from shearing forces during rotation. The sequence is that of Flagellar P-ring protein from Marinomonas sp. (strain MWYL1).